Here is a 172-residue protein sequence, read N- to C-terminus: C-phycocyanin beta chain (172 aa).

Asn-72 is subject to N4-methylasparagine. Residues Cys-82 and Cys-153 each coordinate (2R,3E)-phycocyanobilin.

It belongs to the phycobiliprotein family. As to quaternary structure, heterodimer of an alpha and a beta subunit, which further assembles into trimers and the trimers into hexamers. The basic functional unit of phycobiliproteins is a ring-shaped hexamer formed from two back-to-back trimers contacting via the alpha chain subunits. The trimers are composed of alpha/beta subunit heterodimers arranged around a three-fold axis of symmetry. The phycoerythrins also contain a gamma subunit which is located in the center of the hexamer. Post-translationally, contains two covalently linked phycocyanobilin chromophores.

It is found in the plastid. The protein resides in the cyanelle thylakoid membrane. Functionally, light-harvesting photosynthetic bile pigment-protein from the phycobiliprotein complex (phycobilisome, PBS). Phycocyanin is the major phycobiliprotein in the PBS rod. This is C-phycocyanin beta chain (cpcB) from Cyanophora paradoxa.